The following is a 355-amino-acid chain: dTDP-D-glucose 4,6-dehydratase (355 aa).

T142 provides a ligand contact to substrate. D143 (proton donor) is an active-site residue. Residues E144 and Y166 each act as proton acceptor in the active site.

Belongs to the NAD(P)-dependent epimerase/dehydratase family. dTDP-glucose dehydratase subfamily. Requires NAD(+) as cofactor.

It catalyses the reaction dTDP-alpha-D-glucose = dTDP-4-dehydro-6-deoxy-alpha-D-glucose + H2O. This chain is dTDP-D-glucose 4,6-dehydratase (Tgds), found in Mus musculus (Mouse).